The chain runs to 201 residues: Small ribosomal subunit protein uS4 (201 aa).

Residues 93 to 153 (QRLDNIVYRL…EKSKNLVIIK (61 aa)) enclose the S4 RNA-binding domain.

The protein belongs to the universal ribosomal protein uS4 family. As to quaternary structure, part of the 30S ribosomal subunit. Contacts protein S5. The interaction surface between S4 and S5 is involved in control of translational fidelity.

One of the primary rRNA binding proteins, it binds directly to 16S rRNA where it nucleates assembly of the body of the 30S subunit. Its function is as follows. With S5 and S12 plays an important role in translational accuracy. In Latilactobacillus sakei subsp. sakei (strain 23K) (Lactobacillus sakei subsp. sakei), this protein is Small ribosomal subunit protein uS4.